A 118-amino-acid polypeptide reads, in one-letter code: Small ribosomal subunit protein uS13 (118 aa).

The segment at 94 to 118 (SLPVRGQRTKTNARTRKGPRKAIKK) is disordered.

Belongs to the universal ribosomal protein uS13 family. In terms of assembly, part of the 30S ribosomal subunit. Forms a loose heterodimer with protein S19. Forms two bridges to the 50S subunit in the 70S ribosome.

Its function is as follows. Located at the top of the head of the 30S subunit, it contacts several helices of the 16S rRNA. In the 70S ribosome it contacts the 23S rRNA (bridge B1a) and protein L5 of the 50S subunit (bridge B1b), connecting the 2 subunits; these bridges are implicated in subunit movement. Contacts the tRNAs in the A and P-sites. This Aeromonas hydrophila subsp. hydrophila (strain ATCC 7966 / DSM 30187 / BCRC 13018 / CCUG 14551 / JCM 1027 / KCTC 2358 / NCIMB 9240 / NCTC 8049) protein is Small ribosomal subunit protein uS13.